We begin with the raw amino-acid sequence, 328 residues long: Glucokinase (328 aa).

Ala-16–Thr-21 is a binding site for ATP.

This sequence belongs to the bacterial glucokinase family.

It is found in the cytoplasm. It catalyses the reaction D-glucose + ATP = D-glucose 6-phosphate + ADP + H(+). This chain is Glucokinase, found in Neisseria meningitidis serogroup C (strain 053442).